A 457-amino-acid chain; its full sequence is UDP-N-acetylmuramoylalanine--D-glutamate ligase (457 aa).

An ATP-binding site is contributed by 126–132 (GTAGKGS).

Belongs to the MurCDEF family.

It is found in the cytoplasm. It carries out the reaction UDP-N-acetyl-alpha-D-muramoyl-L-alanine + D-glutamate + ATP = UDP-N-acetyl-alpha-D-muramoyl-L-alanyl-D-glutamate + ADP + phosphate + H(+). The protein operates within cell wall biogenesis; peptidoglycan biosynthesis. Functionally, cell wall formation. Catalyzes the addition of glutamate to the nucleotide precursor UDP-N-acetylmuramoyl-L-alanine (UMA). This Deinococcus radiodurans (strain ATCC 13939 / DSM 20539 / JCM 16871 / CCUG 27074 / LMG 4051 / NBRC 15346 / NCIMB 9279 / VKM B-1422 / R1) protein is UDP-N-acetylmuramoylalanine--D-glutamate ligase.